A 100-amino-acid chain; its full sequence is Urease subunit gamma (100 aa).

This sequence belongs to the urease gamma subunit family. In terms of assembly, heterotrimer of UreA (gamma), UreB (beta) and UreC (alpha) subunits. Three heterotrimers associate to form the active enzyme.

The protein resides in the cytoplasm. It catalyses the reaction urea + 2 H2O + H(+) = hydrogencarbonate + 2 NH4(+). Its pathway is nitrogen metabolism; urea degradation; CO(2) and NH(3) from urea (urease route): step 1/1. The chain is Urease subunit gamma from Stutzerimonas stutzeri (strain A1501) (Pseudomonas stutzeri).